The following is a 213-amino-acid chain: Orotate phosphoribosyltransferase (213 aa).

K26 contacts 5-phospho-alpha-D-ribose 1-diphosphate. Position 34–35 (34–35 (FF)) interacts with orotate. 5-phospho-alpha-D-ribose 1-diphosphate-binding positions include 72 to 73 (YK), R99, K100, K103, H105, and 124 to 132 (DDVITAGTA). Orotate contacts are provided by T128 and R156.

It belongs to the purine/pyrimidine phosphoribosyltransferase family. PyrE subfamily. Homodimer. It depends on Mg(2+) as a cofactor.

The enzyme catalyses orotidine 5'-phosphate + diphosphate = orotate + 5-phospho-alpha-D-ribose 1-diphosphate. The protein operates within pyrimidine metabolism; UMP biosynthesis via de novo pathway; UMP from orotate: step 1/2. Functionally, catalyzes the transfer of a ribosyl phosphate group from 5-phosphoribose 1-diphosphate to orotate, leading to the formation of orotidine monophosphate (OMP). The polypeptide is Orotate phosphoribosyltransferase (Pseudomonas putida (strain GB-1)).